Here is a 668-residue protein sequence, read N- to C-terminus: Echinocandin B biosynthetic cluster protein J (668 aa).

5 disordered regions span residues 1–20, 92–113, 224–322, 330–349, and 483–506; these read MHFA…DQSL, YTPP…PPTP, PLDH…QSAD, EVAE…SIPT, and NCSS…PPLK. The span at 96-106 shows a compositional bias: polar residues; sequence SLDSRSSATPP. The segment covering 264 to 275 has biased composition (pro residues); sequence NPEPGTPTPPSP. Over residues 311 to 322 the composition is skewed to polar residues; it reads YRSTPSPCQSAD. Over residues 484–494 the composition is skewed to low complexity; the sequence is CSSSSCSSSAS. Residues 495–505 are compositionally biased toward basic and acidic residues; that stretch reads KKNEEKREPPL.

It participates in antifungal biosynthesis. Part of the gene cluster that mediates the biosynthesis of echinocandin B, a fungal lipidated cyclic hexapeptide that acts as an antifungal agent. Linoleoyl-AMP, produced by the fatty-acyl-AMP ligase ecdI, is transferred to the initiation carrier domain (T0) of ecdA. The linoleoyl-S-phosphopantetheinyl-T0 is sequentially extended with L-ornithine, L-threonine, L-proline, L-homotyrosine, L-threonine, and 4R-methyl-L-proline to form the linear hexapeptide. Thereafter, the terminal condensation (C7) performs macrocyclization of the NRPS product and the cyclic scaffold is released from ecdA. All six of the amino acid residues are hydroxylated, including 4R,5R-dihydroxy-L-ornithine, 4R-hydroxyl-L-proline, 3S,4S-dihydroxy-L-homotyrosine, and 3S-hydroxyl-4S-methyl-L-prolin. In the pathway, all the hydroxylation reactions are proposed to occur following completion of the cyclic peptide, so the unhydroxylated precursor produced by ecdA will undergo six rounds of hydroxylation. Five hydroxylase genes (ecdG, ecdH, ecdK, htyE and htyF) are embedded within the echinocandin B (ecd) and L-homotyrosine (hty) clusters. This is Echinocandin B biosynthetic cluster protein J from Aspergillus rugulosus (Emericella rugulosa).